The primary structure comprises 297 residues: Pyrroline-5-carboxylate reductase 1 (297 aa).

This sequence belongs to the pyrroline-5-carboxylate reductase family.

It is found in the cytoplasm. It catalyses the reaction L-proline + NADP(+) = (S)-1-pyrroline-5-carboxylate + NADPH + 2 H(+). The enzyme catalyses L-proline + NAD(+) = (S)-1-pyrroline-5-carboxylate + NADH + 2 H(+). It functions in the pathway amino-acid biosynthesis; L-proline biosynthesis; L-proline from L-glutamate 5-semialdehyde: step 1/1. Catalyzes the reduction of 1-pyrroline-5-carboxylate (PCA) to L-proline. The protein is Pyrroline-5-carboxylate reductase 1 (proH) of Bacillus subtilis (strain 168).